Here is a 633-residue protein sequence, read N- to C-terminus: Chaperone protein HtpG (633 aa).

An a; substrate-binding region spans residues 1–345 (MSADTQSETL…SDDLPLNISR (345 aa)). The tract at residues 346 to 562 (EMLQHNPMIS…EYDFGMGMQR (217 aa)) is b. The c stretch occupies residues 563 to 633 (LLQAAGHQLP…VRRVNNLLAG (71 aa)).

It belongs to the heat shock protein 90 family. Homodimer.

The protein localises to the cytoplasm. Molecular chaperone. Has ATPase activity. This is Chaperone protein HtpG from Halorhodospira halophila (strain DSM 244 / SL1) (Ectothiorhodospira halophila (strain DSM 244 / SL1)).